We begin with the raw amino-acid sequence, 297 residues long: Putative peptidyl-prolyl cis-trans isomerase YacD (297 aa).

The N-terminal stretch at 1 to 32 (MKSRTIWTIILGALLVCCIAVAYTLTKSQAGA) is a signal peptide. A PpiC domain is found at 154–247 (DDSYRIRHIV…NGYAIIQLKE (94 aa)).

The enzyme catalyses [protein]-peptidylproline (omega=180) = [protein]-peptidylproline (omega=0). The chain is Putative peptidyl-prolyl cis-trans isomerase YacD (yacD) from Bacillus subtilis (strain 168).